A 447-amino-acid chain; its full sequence is Probable glycine dehydrogenase (decarboxylating) subunit 1 (447 aa).

The protein belongs to the GcvP family. N-terminal subunit subfamily. The glycine cleavage system is composed of four proteins: P, T, L and H. In this organism, the P 'protein' is a heterodimer of two subunits.

The catalysed reaction is N(6)-[(R)-lipoyl]-L-lysyl-[glycine-cleavage complex H protein] + glycine + H(+) = N(6)-[(R)-S(8)-aminomethyldihydrolipoyl]-L-lysyl-[glycine-cleavage complex H protein] + CO2. In terms of biological role, the glycine cleavage system catalyzes the degradation of glycine. The P protein binds the alpha-amino group of glycine through its pyridoxal phosphate cofactor; CO(2) is released and the remaining methylamine moiety is then transferred to the lipoamide cofactor of the H protein. The protein is Probable glycine dehydrogenase (decarboxylating) subunit 1 of Bacillus thuringiensis subsp. konkukian (strain 97-27).